The primary structure comprises 422 residues: Elongation factor 1-alpha (422 aa).

One can recognise a tr-type G domain in the interval 5–221; that stretch reads KPHMNLAVIG…NNLKVPEKPS (217 aa). Residues 14–21 form a G1 region; the sequence is GHIDHGKS. 14–21 contacts GTP; it reads GHIDHGKS. Ser21 is a Mg(2+) binding site. The interval 70–74 is G2; it reads GITID. The tract at residues 91-94 is G3; that stretch reads DCPG. GTP-binding positions include 91 to 95 and 146 to 149; these read DCPGH and NKMD. The G4 stretch occupies residues 146-149; the sequence is NKMD. The interval 185–187 is G5; the sequence is SAF.

It belongs to the TRAFAC class translation factor GTPase superfamily. Classic translation factor GTPase family. EF-Tu/EF-1A subfamily.

The protein resides in the cytoplasm. The enzyme catalyses GTP + H2O = GDP + phosphate + H(+). Functionally, GTP hydrolase that promotes the GTP-dependent binding of aminoacyl-tRNA to the A-site of ribosomes during protein biosynthesis. In Methanosarcina barkeri (strain Fusaro / DSM 804), this protein is Elongation factor 1-alpha.